The chain runs to 254 residues: Leucyl/phenylalanyl-tRNA--protein transferase (254 aa).

The protein belongs to the L/F-transferase family.

It localises to the cytoplasm. It carries out the reaction N-terminal L-lysyl-[protein] + L-leucyl-tRNA(Leu) = N-terminal L-leucyl-L-lysyl-[protein] + tRNA(Leu) + H(+). The enzyme catalyses N-terminal L-arginyl-[protein] + L-leucyl-tRNA(Leu) = N-terminal L-leucyl-L-arginyl-[protein] + tRNA(Leu) + H(+). The catalysed reaction is L-phenylalanyl-tRNA(Phe) + an N-terminal L-alpha-aminoacyl-[protein] = an N-terminal L-phenylalanyl-L-alpha-aminoacyl-[protein] + tRNA(Phe). Functions in the N-end rule pathway of protein degradation where it conjugates Leu, Phe and, less efficiently, Met from aminoacyl-tRNAs to the N-termini of proteins containing an N-terminal arginine or lysine. The polypeptide is Leucyl/phenylalanyl-tRNA--protein transferase (Burkholderia cenocepacia (strain HI2424)).